The chain runs to 245 residues: 14-3-3 protein zeta/delta (245 aa).

The residue at position 1 (Met1) is an N-acetylmethionine. Residue Lys3 is modified to N6-acetyllysine. Ser58 carries the post-translational modification Phosphoserine; by PKA. Lys68 is subject to N6-acetyllysine. Ser184, Ser207, and Ser210 each carry phosphoserine. At Thr232 the chain carries Phosphothreonine; by CK1.

This sequence belongs to the 14-3-3 family. As to quaternary structure, homodimer. Heterodimerizes with YWHAE. Homo- and heterodimerization is inhibited by phosphorylation on Ser-58. Interacts with FOXO4, NOXA1, SSH1 ARHGEF2, CDK16 and BSPRY. Interacts with WEE1 (C-terminal). Interacts with MLF1 (phosphorylated form); the interaction retains it in the cytoplasm. Interacts with BAX; the interaction occurs in the cytoplasm. Under stress conditions, MAPK8-mediated phosphorylation releases BAX to mitochondria. Interacts with TP53; the interaction enhances p53 transcriptional activity. The Ser-58 phosphorylated form inhibits this interaction and p53 transcriptional activity. Interacts with ABL1 (phosphorylated form); the interaction retains ABL1 in the cytoplasm. Interacts with PKA-phosphorylated AANAT; the interaction modulates AANAT enzymatic activity by increasing affinity for arylalkylamines and acetyl-CoA and protecting the enzyme from dephosphorylation and proteasomal degradation. It may also prevent thiol-dependent inactivation. Interacts with AKT1; the interaction phosphorylates YWHAZ and modulates dimerization. Interacts with GAB2. Interacts with BCL2L11, SAMSN1 and TLK2. Interacts with phosphorylated RAF1; the interaction is inhibited when YWHAZ is phosphorylated on Thr-232. Interacts with Thr-phosphorylated ITGB2. Interacts with the 'Thr-369' phosphorylated form of DAPK2. Interacts with PI4KB, TBC1D22A and TBC1D22B. Interacts with ZFP36L1 (via phosphorylated form); this interaction occurs in a p38 MAPK- and AKT-signaling pathways. Interacts with SLITRK1. Interacts with AK5, LDB1, MADD, MARK3, PDE1A and SMARCB1. Interacts with YWHAZ. Interacts with MEFV. Interacts with ADAM22 (via C-terminus). Post-translationally, the delta, brain-specific form differs from the zeta form in being phosphorylated. Phosphorylation on Ser-184 by MAPK8; promotes dissociation of BAX and translocation of BAX to mitochondria. Phosphorylation on Thr-232; inhibits binding of RAF1. Phosphorylated on Ser-58 by PKA and protein kinase C delta type catalytic subunit in a sphingosine-dependent fashion. Phosphorylation on Ser-58 by PKA; disrupts homodimerization and heterodimerization with YHAE and TP53.

It is found in the cytoplasm. The protein localises to the melanosome. Adapter protein implicated in the regulation of a large spectrum of both general and specialized signaling pathways. Binds to a large number of partners, usually by recognition of a phosphoserine or phosphothreonine motif. Binding generally results in the modulation of the activity of the binding partner. Promotes cytosolic retention and inactivation of TFEB transcription factor by binding to phosphorylated TFEB. Induces ARHGEF7 activity on RAC1 as well as lamellipodia and membrane ruffle formation. In neurons, regulates spine maturation through the modulation of ARHGEF7 activity. This Bos taurus (Bovine) protein is 14-3-3 protein zeta/delta (YWHAZ).